The chain runs to 83 residues: Small ribosomal subunit protein bS16 (83 aa).

This sequence belongs to the bacterial ribosomal protein bS16 family.

This is Small ribosomal subunit protein bS16 from Acinetobacter baumannii (strain AB307-0294).